The primary structure comprises 148 residues: Endoribonuclease YbeY (148 aa).

Zn(2+)-binding residues include His102, His106, and His112.

This sequence belongs to the endoribonuclease YbeY family. Zn(2+) serves as cofactor.

Its subcellular location is the cytoplasm. Functionally, single strand-specific metallo-endoribonuclease involved in late-stage 70S ribosome quality control and in maturation of the 3' terminus of the 16S rRNA. The chain is Endoribonuclease YbeY from Phytoplasma mali (strain AT).